Here is a 255-residue protein sequence, read N- to C-terminus: 1-(5-phosphoribosyl)-5-[(5-phosphoribosylamino)methylideneamino] imidazole-4-carboxamide isomerase (255 aa).

Residue Asp-8 is the Proton acceptor of the active site. Asp-129 serves as the catalytic Proton donor.

This sequence belongs to the HisA/HisF family.

Its subcellular location is the cytoplasm. The enzyme catalyses 1-(5-phospho-beta-D-ribosyl)-5-[(5-phospho-beta-D-ribosylamino)methylideneamino]imidazole-4-carboxamide = 5-[(5-phospho-1-deoxy-D-ribulos-1-ylimino)methylamino]-1-(5-phospho-beta-D-ribosyl)imidazole-4-carboxamide. Its pathway is amino-acid biosynthesis; L-histidine biosynthesis; L-histidine from 5-phospho-alpha-D-ribose 1-diphosphate: step 4/9. This chain is 1-(5-phosphoribosyl)-5-[(5-phosphoribosylamino)methylideneamino] imidazole-4-carboxamide isomerase, found in Synechococcus sp. (strain CC9605).